Reading from the N-terminus, the 137-residue chain is Universal stress protein in QAH/OAS sulfhydrylase 3'region (137 aa).

It belongs to the universal stress protein A family.

This is Universal stress protein in QAH/OAS sulfhydrylase 3'region from Thermus aquaticus.